We begin with the raw amino-acid sequence, 41 residues long: Ornatin-A2 (41 aa).

Positions 33-35 (RGD) match the Cell attachment site motif.

Belongs to the ornatin family.

It is found in the secreted. Its function is as follows. Potent inhibitor of fibrinogen interaction with platelet receptors expressed on glycoprotein IIb-IIIa complex. May prevent blood from clotting during either feeding and/or storage of ingested blood. This Placobdella ornata (Turtle leech) protein is Ornatin-A2.